The sequence spans 168 residues: Small ribosomal subunit protein uS5 (168 aa).

Positions 13-76 (LEENVVAINR…EDAKRKLITV (64 aa)) constitute an S5 DRBM domain.

It belongs to the universal ribosomal protein uS5 family. As to quaternary structure, part of the 30S ribosomal subunit. Contacts proteins S4 and S8.

Its function is as follows. With S4 and S12 plays an important role in translational accuracy. Functionally, located at the back of the 30S subunit body where it stabilizes the conformation of the head with respect to the body. The polypeptide is Small ribosomal subunit protein uS5 (Leuconostoc mesenteroides subsp. mesenteroides (strain ATCC 8293 / DSM 20343 / BCRC 11652 / CCM 1803 / JCM 6124 / NCDO 523 / NBRC 100496 / NCIMB 8023 / NCTC 12954 / NRRL B-1118 / 37Y)).